Consider the following 504-residue polypeptide: Maturase K (504 aa).

The protein belongs to the intron maturase 2 family. MatK subfamily.

Its subcellular location is the plastid. It is found in the chloroplast. Its function is as follows. Usually encoded in the trnK tRNA gene intron. Probably assists in splicing its own and other chloroplast group II introns. This chain is Maturase K, found in Nepenthes gracilis (Slender pitcher plant).